The following is a 1170-amino-acid chain: Probable mRNA-capping enzyme (1170 aa).

The active-site N6-GMP-lysine intermediate is the Lys292. In terms of domain architecture, mRNA cap 0 methyltransferase spans 684–1007 (SNAAGMRAFN…LNRYYVFRKT (324 aa)). 693–694 (NN) is a binding site for mRNA. Residues Lys697, Gly715, Asp737, and 813-815 (QFT) each bind S-adenosyl-L-methionine.

It in the N-terminal section; belongs to the dsDNA virus mRNA guanylyltransferase family. This sequence in the C-terminal section; belongs to the class I-like SAM-binding methyltransferase superfamily. mRNA cap 0 methyltransferase family.

Its subcellular location is the virion. It carries out the reaction a 5'-end triphospho-ribonucleoside in mRNA + H2O = a 5'-end diphospho-ribonucleoside in mRNA + phosphate + H(+). The catalysed reaction is a 5'-end diphospho-ribonucleoside in mRNA + GTP + H(+) = a 5'-end (5'-triphosphoguanosine)-ribonucleoside in mRNA + diphosphate. It catalyses the reaction a 5'-end (5'-triphosphoguanosine)-ribonucleoside in mRNA + S-adenosyl-L-methionine = a 5'-end (N(7)-methyl 5'-triphosphoguanosine)-ribonucleoside in mRNA + S-adenosyl-L-homocysteine. It participates in mRNA processing; mRNA capping. Functionally, responsible for methylating the 5'-cap structure of mRNAs. The chain is Probable mRNA-capping enzyme from Acanthamoeba polyphaga mimivirus (APMV).